Reading from the N-terminus, the 449-residue chain is MAHIKFDYSKVLDKFVAPHEVDNLQAQVTVADEMIRKGTGPGADFLGWRDLPENYDREEFDRILKAAEKIKEESDVLVVIGIGGSYLGAKAAIDFLSNHFANLQTKEERKAPQIVYAGNSISSTYLADLLEYVEGKDFSVNVISKSGTTTEPAIAFRLFKELLVKKYGQEEANKRIYATTDRQKGAVKVEADANGWETFVVPDDIGGRFSVLTAVGLLPIAVSGADIKALMEGANAARKEYSSSKISENEAYQYAAIRNILYRKGYTTEILANYEPSLQYFAEWWKQLAGESEGKDQRGIYPTSANFSTDLHSLGQFIQEGTRNLFETVVRVDKPRKNVVIPELAEDLDGLGYLQGKDVDFVNKKATDGVLLAHTDGDVPNMFITIPEQDAFTLGYIIYFFELAIALSGYLNAVNPFNQPGVEAYKKNMFALLGKPGFEELGAELNARL.

Catalysis depends on Glu-291, which acts as the Proton donor. Catalysis depends on residues His-312 and Lys-426.

This sequence belongs to the GPI family.

Its subcellular location is the cytoplasm. The enzyme catalyses alpha-D-glucose 6-phosphate = beta-D-fructose 6-phosphate. It participates in carbohydrate biosynthesis; gluconeogenesis. It functions in the pathway carbohydrate degradation; glycolysis; D-glyceraldehyde 3-phosphate and glycerone phosphate from D-glucose: step 2/4. Its function is as follows. Catalyzes the reversible isomerization of glucose-6-phosphate to fructose-6-phosphate. This chain is Glucose-6-phosphate isomerase, found in Streptococcus thermophilus (strain CNRZ 1066).